The chain runs to 561 residues: DNA ligase B (561 aa).

Residue Lys125 is the N6-AMP-lysine intermediate of the active site.

The protein belongs to the NAD-dependent DNA ligase family. LigB subfamily.

The enzyme catalyses NAD(+) + (deoxyribonucleotide)n-3'-hydroxyl + 5'-phospho-(deoxyribonucleotide)m = (deoxyribonucleotide)n+m + AMP + beta-nicotinamide D-nucleotide.. Its function is as follows. Catalyzes the formation of phosphodiester linkages between 5'-phosphoryl and 3'-hydroxyl groups in double-stranded DNA using NAD as a coenzyme and as the energy source for the reaction. This chain is DNA ligase B, found in Salmonella choleraesuis (strain SC-B67).